Consider the following 145-residue polypeptide: NADH-quinone oxidoreductase subunit A 1 (145 aa).

The next 3 membrane-spanning stretches (helical) occupy residues 18–38, 71–91, and 104–124; these read ILPL…LLLA, VPFY…VFIF, and GLIH…WLWL.

The protein belongs to the complex I subunit 3 family. As to quaternary structure, NDH-1 is composed of 14 different subunits. Subunits NuoA, H, J, K, L, M, N constitute the membrane sector of the complex.

It is found in the cell inner membrane. The catalysed reaction is a quinone + NADH + 5 H(+)(in) = a quinol + NAD(+) + 4 H(+)(out). In terms of biological role, NDH-1 shuttles electrons from NADH, via FMN and iron-sulfur (Fe-S) centers, to quinones in the respiratory chain. The immediate electron acceptor for the enzyme in this species is believed to be ubiquinone. Couples the redox reaction to proton translocation (for every two electrons transferred, four hydrogen ions are translocated across the cytoplasmic membrane), and thus conserves the redox energy in a proton gradient. In Geotalea uraniireducens (strain Rf4) (Geobacter uraniireducens), this protein is NADH-quinone oxidoreductase subunit A 1.